Consider the following 144-residue polypeptide: Maximins 3/H11 type 1 (144 aa).

Residues 1-18 form the signal peptide; the sequence is MNFKYIVAVSFLIASAYA. Propeptides lie at residues 19–43 and 73–122; these read RSVQNDEQSLSQRDVLEEESLREIR and RTAE…KKEK. I143 carries the post-translational modification Isoleucine amide.

This sequence belongs to the bombinin family. In terms of tissue distribution, expressed by the skin glands.

It localises to the secreted. Maximin-3 shows antibacterial activity against both Gram-positive and Gram-negative bacteria. It also shows antimicrobial activity against the fungus C.albicans, but not against A.flavus nor P.uticale. It has little hemolytic activity. It possess a significant cytotoxicity against tumor cell lines. It possess a significant anti-HIV activity. It shows high spermicidal activity. Its function is as follows. Maximin-H11 shows antimicrobial activity against bacteria and against the fungus C.albicans. Shows strong hemolytic activity. The chain is Maximins 3/H11 type 1 from Bombina maxima (Giant fire-bellied toad).